Here is a 239-residue protein sequence, read N- to C-terminus: MRIERVDDTTVKLFITYSDIEARGFSREDLWTNRKRGEEFFWSMMDEINEEEDFVVEGPLWIQVHAFDKGVEVTISKSKNEDMMNMSDDDATDQFDEQVQELLAQTLEGEDQLEELFEQRTKEKEAQGSKRQKSSARKNTRTIIVKFNDLEDVINYAYHSNPITTEFEDLLYMVDGTYYYAVYFDSHVDQEVINDSYSQLLEFAYPTDRTEVYLNDYAKIIMSHNVTAQVRRYFPETTE.

The span at 118–128 (EQRTKEKEAQG) shows a compositional bias: basic and acidic residues. The segment at 118–137 (EQRTKEKEAQGSKRQKSSAR) is disordered.

It belongs to the MecA family. Homodimer.

In terms of biological role, enables the recognition and targeting of unfolded and aggregated proteins to the ClpC protease or to other proteins involved in proteolysis. The protein is Adapter protein MecA of Staphylococcus aureus (strain COL).